The primary structure comprises 207 residues: Dephospho-CoA kinase (207 aa).

Residues Ile10 to Pro207 form the DPCK domain. Gly18–Ala23 is an ATP binding site.

Belongs to the CoaE family.

It is found in the cytoplasm. The catalysed reaction is 3'-dephospho-CoA + ATP = ADP + CoA + H(+). Its pathway is cofactor biosynthesis; coenzyme A biosynthesis; CoA from (R)-pantothenate: step 5/5. Catalyzes the phosphorylation of the 3'-hydroxyl group of dephosphocoenzyme A to form coenzyme A. The polypeptide is Dephospho-CoA kinase (Pseudomonas putida (strain ATCC 47054 / DSM 6125 / CFBP 8728 / NCIMB 11950 / KT2440)).